The primary structure comprises 155 residues: SsrA-binding protein (155 aa).

The protein belongs to the SmpB family.

The protein localises to the cytoplasm. In terms of biological role, required for rescue of stalled ribosomes mediated by trans-translation. Binds to transfer-messenger RNA (tmRNA), required for stable association of tmRNA with ribosomes. tmRNA and SmpB together mimic tRNA shape, replacing the anticodon stem-loop with SmpB. tmRNA is encoded by the ssrA gene; the 2 termini fold to resemble tRNA(Ala) and it encodes a 'tag peptide', a short internal open reading frame. During trans-translation Ala-aminoacylated tmRNA acts like a tRNA, entering the A-site of stalled ribosomes, displacing the stalled mRNA. The ribosome then switches to translate the ORF on the tmRNA; the nascent peptide is terminated with the 'tag peptide' encoded by the tmRNA and targeted for degradation. The ribosome is freed to recommence translation, which seems to be the essential function of trans-translation. This is SsrA-binding protein from Gloeothece citriformis (strain PCC 7424) (Cyanothece sp. (strain PCC 7424)).